Here is a 157-residue protein sequence, read N- to C-terminus: uncharacterized protein (157 aa).

Residues leucine 9 to threonine 146 form the N-acetyltransferase domain.

This is an uncharacterized protein from Bacillus cereus (strain ZK / E33L).